Consider the following 418-residue polypeptide: NADH-quinone oxidoreductase subunit D (418 aa).

Belongs to the complex I 49 kDa subunit family. NDH-1 is composed of 14 different subunits. Subunits NuoB, C, D, E, F, and G constitute the peripheral sector of the complex.

It localises to the cell inner membrane. The catalysed reaction is a quinone + NADH + 5 H(+)(in) = a quinol + NAD(+) + 4 H(+)(out). In terms of biological role, NDH-1 shuttles electrons from NADH, via FMN and iron-sulfur (Fe-S) centers, to quinones in the respiratory chain. The immediate electron acceptor for the enzyme in this species is believed to be ubiquinone. Couples the redox reaction to proton translocation (for every two electrons transferred, four hydrogen ions are translocated across the cytoplasmic membrane), and thus conserves the redox energy in a proton gradient. The sequence is that of NADH-quinone oxidoreductase subunit D from Neisseria meningitidis serogroup C / serotype 2a (strain ATCC 700532 / DSM 15464 / FAM18).